Consider the following 157-residue polypeptide: uncharacterized protein (157 aa).

In terms of domain architecture, N-acetyltransferase spans 9 to 146; it reads LLINYKTLDE…GDFYVWHPET (138 aa).

This is an uncharacterized protein from Bacillus cereus (strain AH187).